The primary structure comprises 5495 residues: Microtubule-associated protein futsch (5495 aa).

Disordered regions lie at residues M1–G97, A656–E975, R988–E1074, E1086–K1111, K1128–P1167, S1185–I1204, K1255–R1275, H1306–K1358, N1402–S1840, E1866–V2631, A2709–A2810, L2830–L4166, K4196–P4230, I4362–L4612, A4636–L4668, A4687–A4975, K5035–Q5065, S5101–S5138, P5170–A5199, and G5328–E5350. The segment covering A35 to Q48 has biased composition (low complexity). 3 stretches are compositionally biased toward basic and acidic residues: residues A656–D672, E696–E716, and G758–S795. Low complexity-rich tracts occupy residues P797–P806 and P819–K831. Basic and acidic residues predominate over residues S832 to E843. Positions R850–Q888 are enriched in low complexity. Residues K918–G931 are compositionally biased toward basic and acidic residues. Residues T932–S942 are compositionally biased toward polar residues. Composition is skewed to basic and acidic residues over residues D962–E975 and R988–P1007. The span at G1012–V1041 shows a compositional bias: acidic residues. Basic and acidic residues predominate over residues M1047 to K1065. Composition is skewed to basic and acidic residues over residues K1128–E1140 and P1148–Q1163. Positions T1187–P1196 are enriched in polar residues. Composition is skewed to basic and acidic residues over residues H1306–Q1319, S1327–K1337, K1343–K1358, and E1408–S1443. 2 tandem repeats follow at residues R1469–P1502 and L1513–K1539. Residues R1469–R4032 are 53 X approximate repeat. Basic and acidic residues-rich tracts occupy residues P1546–S1555, S1571–S1663, S1679–I1696, G1718–S1732, and S1748–S1779. 17 tandem repeats follow at residues K1622–I1649, D1660–K1686, P1690–G1718, K1755–T1782, E1790–S1818, V1837–L1865, S1874–P1902, P1911–E1939, K1948–K1976, T1985–Q2013, D2022–K2050, A2059–K2087, A2096–K2124, A2133–K2161, A2170–K2198, K2215–V2243, and E2262–S2292. Polar residues predominate over residues E1804–R1815. Basic and acidic residues-rich tracts occupy residues V1887–S1896, H1904–K1942, M1960–K1976, S1994–R2007, S2041–A2059, S2078–A2096, S2115–A2133, S2152–A2170, S2189–A2207, S2226–A2244, S2263–A2281, S2300–A2318, S2337–A2355, S2374–M2391, S2419–S2435, S2466–T2482, I2560–S2588, and S2604–R2627. The stretch at A2355–M2391 is repeat 20. 2 repeat units span residues L2703–P2726 and W2761–E2787. Positions E2764 to R2780 are enriched in basic and acidic residues. Residue S2800 is modified to Phosphoserine; by GSK3-beta. 3 tandem repeats follow at residues L2820–Q2846, L2864–R2892, and V2907–S2933. Residues P2845–P2861 are compositionally biased toward low complexity. Composition is skewed to basic and acidic residues over residues A2889–S2914 and G2942–S2954. Residues R2955–D2966 show a composition bias toward polar residues. A run of 28 repeats spans residues P2956–K2987, G3006–E3034, S3049–S3075, E3089–A3117, D3131–D3158, K3200–G3224, D3228–S3256, V3265–L3293, P3302–K3330, K3339–P3367, D3376–P3404, P3413–P3441, D3450–P3478, D3487–P3515, D3524–P3552, D3561–P3589, D3598–P3626, D3635–P3663, D3672–P3700, D3709–P3737, D3746–P3774, D3783–P3811, D3820–P3848, R3867–D3894, E3895–R3921, D3931–R3958, D3968–R3995, and D4005–R4032. Composition is skewed to basic and acidic residues over residues S2980 to A2996, S3017 to P3051, V3061 to S3075, E3087 to E3116, P3156 to R3168, S3175 to K3208, and I3226 to K3248. S3067, S3071, and S3075 each carry phosphoserine. Over residues S3300–K3310 the composition is skewed to basic and acidic residues. Polar residues predominate over residues S3316 to E3327. 14 stretches are compositionally biased toward basic and acidic residues: residues N3350–P3363, S3373–V3399, S3419–S3431, V3448–A3465, S3484–A3502, S3521–A3539, S3558–A3576, E3599–A3613, S3632–A3650, S3669–A3687, E3710–A3724, S3743–A3761, S3780–A3798, and S3817–A3835. The span at E3836–S3850 shows a compositional bias: low complexity. Composition is skewed to basic and acidic residues over residues S3854 to A3872, S3891 to A3909, S3928 to A3946, S3965 to T3983, S4002 to A4020, S4039 to K4066, S4086 to E4095, and A4115 to S4141. 2 stretches are compositionally biased toward polar residues: residues R4142 to S4152 and Q4214 to T4223. Composition is skewed to basic and acidic residues over residues I4362–A4379, D4386–P4410, and I4419–Q4432. Low complexity predominate over residues P4443–A4461. The span at S4462 to R4481 shows a compositional bias: basic and acidic residues. A compositionally biased stretch (polar residues) spans R4498–T4508. The span at E4517–T4528 shows a compositional bias: low complexity. Residues V4529–S4539 show a composition bias toward basic and acidic residues. A compositionally biased stretch (low complexity) spans F4540–Q4560. Composition is skewed to basic and acidic residues over residues K4575–S4584 and S4639–K4650. Low complexity-rich tracts occupy residues V4651–A4662 and T4703–S4714. The span at P4744–D4754 shows a compositional bias: acidic residues. Composition is skewed to basic and acidic residues over residues E4755–S4764 and L4788–E4798. The segment covering T4804–T4829 has biased composition (low complexity). Polar residues predominate over residues E4835 to G4851. The span at G4875–S4905 shows a compositional bias: low complexity. Positions G4915–P4930 are enriched in polar residues. S4950 is modified (phosphoserine; by GSK3-beta). The span at V4955–Q4970 shows a compositional bias: basic and acidic residues. Polar residues predominate over residues S5101–S5112. A compositionally biased stretch (low complexity) spans S5185–Q5196.

As to quaternary structure, heterodimer of a heavy and a light chain. Interacts with Fmr1. Found in a complex with tubulin and Futsch. Several minor light chains can be created with markedly different pIs. Post-translationally, phosphorylated by SGG/GSK3. Phosphorylated by LRRK2 at the presynapse of neuromuscular junctions, which negatively regulates the activity controlling synaptic differentiation. Neuronal cells within the PNS and CNS.

It localises to the cytoplasm. The protein localises to the cytoskeleton. In terms of biological role, during embryogenesis, necessary for dendritic and axonal organization and growth at the neuromuscular junction through the regulation of the synaptic microtubule cytoskeleton. Microtubule hairpin loops are found within a small subset of synaptic boutons at the neuromuscular synapse, these loops are stabilized by futsch. Loop morphology and dynamics suggest that rearrangement of these microtubule-based loops is a critical component of the process of bouton division and for subsequent nerve-terminal growth and branching. Translation is repressed by Fmr1. Together with ringer, required for neuromuscular junction (NMJ) bouton growth by regulating synaptic microtubules. Function with ringer in maintaining microtubule stability and dynamics, is essential for promoting axon regeneration in response to peripheral (PNS) and central nervous system (CNS) injury. In response to axotomy, acts downstream of a stress response cascade involving Xbp1 splicing, to control axon regeneration. This is Microtubule-associated protein futsch (futsch) from Drosophila melanogaster (Fruit fly).